The following is a 186-amino-acid chain: Large ribosomal subunit protein bL12c (186 aa).

Residues 1 to 11 (MASTLSTITLR) are compositionally biased toward polar residues. Disordered stretches follow at residues 1 to 23 (MAST…STHA) and 162 to 186 (EGVS…VSIA). Residues 1 to 53 (MASTLSTITLRSPSPSTASSTHASIPFPKKALEFPIRTPKLHHRRATFLRPLA) constitute a chloroplast transit peptide. A compositionally biased stretch (low complexity) spans 12 to 23 (SPSPSTASSTHA). Positions 162–180 (EGVSKDEAEDAKKQLEEAG) are enriched in basic and acidic residues.

Belongs to the bacterial ribosomal protein bL12 family.

It localises to the plastid. The protein resides in the chloroplast. The polypeptide is Large ribosomal subunit protein bL12c (RPL12) (Nicotiana tabacum (Common tobacco)).